Here is a 384-residue protein sequence, read N- to C-terminus: Dual specificity protein phosphatase 5 (384 aa).

The 123-residue stretch at 19-141 folds into the Rhodanese domain; that stretch reads AAARCVVLDC…FYSEYPECCV (123 aa). Positions 53–74 match the Nuclear localization signal motif; it reads RRARGGAVSARYVLPDEAARAR. The Tyrosine-protein phosphatase domain maps to 178 to 319; the sequence is GPVEILPFLY…LLQYESEILP (142 aa). C263 acts as the Phosphocysteine intermediate in catalysis.

The protein belongs to the protein-tyrosine phosphatase family. Non-receptor class dual specificity subfamily.

Its subcellular location is the nucleus. It catalyses the reaction O-phospho-L-tyrosyl-[protein] + H2O = L-tyrosyl-[protein] + phosphate. It carries out the reaction O-phospho-L-seryl-[protein] + H2O = L-seryl-[protein] + phosphate. The enzyme catalyses O-phospho-L-threonyl-[protein] + H2O = L-threonyl-[protein] + phosphate. In terms of biological role, dual specificity protein phosphatase; active with phosphotyrosine, phosphoserine and phosphothreonine residues. The highest relative activity is toward ERK1. This chain is Dual specificity protein phosphatase 5 (DUSP5), found in Homo sapiens (Human).